Here is a 221-residue protein sequence, read N- to C-terminus: Cytidylate kinase (221 aa).

Position 7-15 (7-15) interacts with ATP; the sequence is GPSASGKSS.

Belongs to the cytidylate kinase family. Type 1 subfamily.

The protein localises to the cytoplasm. It carries out the reaction CMP + ATP = CDP + ADP. The catalysed reaction is dCMP + ATP = dCDP + ADP. This chain is Cytidylate kinase, found in Borreliella burgdorferi (strain ZS7) (Borrelia burgdorferi).